The chain runs to 317 residues: Thiamine thiazole synthase (317 aa).

Residues cysteine 78, 99 to 100 (EA), glycine 107, and valine 172 each bind substrate. Cysteine 206 carries the 2,3-didehydroalanine (Cys) modification. Substrate-binding positions include aspartate 208, histidine 223, methionine 275, and 285–287 (RMG).

Belongs to the THI4 family. Homooctamer. Requires Fe cation as cofactor. During the catalytic reaction, a sulfide is transferred from Cys-206 to a reaction intermediate, generating a dehydroalanine residue.

The protein localises to the cytoplasm. The protein resides in the nucleus. It carries out the reaction [ADP-thiazole synthase]-L-cysteine + glycine + NAD(+) = [ADP-thiazole synthase]-dehydroalanine + ADP-5-ethyl-4-methylthiazole-2-carboxylate + nicotinamide + 3 H2O + 2 H(+). Its function is as follows. Involved in biosynthesis of the thiamine precursor thiazole. Catalyzes the conversion of NAD and glycine to adenosine diphosphate 5-(2-hydroxyethyl)-4-methylthiazole-2-carboxylic acid (ADT), an adenylated thiazole intermediate. The reaction includes an iron-dependent sulfide transfer from a conserved cysteine residue of the protein to a thiazole intermediate. The enzyme can only undergo a single turnover, which suggests it is a suicide enzyme. May have additional roles in adaptation to various stress conditions and in DNA damage tolerance. The protein is Thiamine thiazole synthase of Yarrowia lipolytica (strain CLIB 122 / E 150) (Yeast).